The chain runs to 69 residues: Large ribosomal subunit protein bL31 (69 aa).

Positions 17, 19, 37, and 40 each coordinate Zn(2+).

Belongs to the bacterial ribosomal protein bL31 family. Type A subfamily. In terms of assembly, part of the 50S ribosomal subunit. Requires Zn(2+) as cofactor.

Binds the 23S rRNA. This is Large ribosomal subunit protein bL31 from Clostridium novyi (strain NT).